Consider the following 381-residue polypeptide: Estradiol 17-beta-dehydrogenase 2 (381 aa).

Residues F4–L24 traverse the membrane as a helical; Signal-anchor for type II membrane protein segment. Q83 to A112 is an NAD(+) binding site. Residue S220 participates in substrate binding. Y233 acts as the Proton acceptor in catalysis.

The protein belongs to the short-chain dehydrogenases/reductases (SDR) family. Homodimer.

The protein localises to the endoplasmic reticulum membrane. The catalysed reaction is 17beta-estradiol + NAD(+) = estrone + NADH + H(+). The enzyme catalyses testosterone + NAD(+) = androst-4-ene-3,17-dione + NADH + H(+). It catalyses the reaction 17beta-hydroxy-5alpha-androstan-3-one + NAD(+) = 5alpha-androstan-3,17-dione + NADH + H(+). It carries out the reaction (20S)-hydroxypregn-4-en-3-one + NAD(+) = progesterone + NADH + H(+). In terms of biological role, catalyzes the NAD-dependent oxidation of highly active 17beta-hydroxysteroids, such as estradiol (E2), testosterone (T), and dihydrotestosterone (DHT), to their less active forms and thus regulates the biological potency of these steroids. Oxidizes estradiol to estrone, testosterone to androstenedione, and dihydrotestosterone to 5alpha-androstan-3,17-dione. Also has 20-alpha-HSD activity. This Mus musculus (Mouse) protein is Estradiol 17-beta-dehydrogenase 2 (Hsd17b2).